Consider the following 343-residue polypeptide: tRNA N6-adenosine threonylcarbamoyltransferase (343 aa).

Fe cation is bound by residues H111 and H115. Substrate is bound by residues 133 to 137 (AVSGG), D166, G179, D183, and N273. Residue D301 coordinates Fe cation.

It belongs to the KAE1 / TsaD family. Requires Fe(2+) as cofactor.

Its subcellular location is the cytoplasm. The catalysed reaction is L-threonylcarbamoyladenylate + adenosine(37) in tRNA = N(6)-L-threonylcarbamoyladenosine(37) in tRNA + AMP + H(+). Required for the formation of a threonylcarbamoyl group on adenosine at position 37 (t(6)A37) in tRNAs that read codons beginning with adenine. Is involved in the transfer of the threonylcarbamoyl moiety of threonylcarbamoyl-AMP (TC-AMP) to the N6 group of A37, together with TsaE and TsaB. TsaD likely plays a direct catalytic role in this reaction. The chain is tRNA N6-adenosine threonylcarbamoyltransferase from Geotalea uraniireducens (strain Rf4) (Geobacter uraniireducens).